Reading from the N-terminus, the 499-residue chain is Bifunctional purine biosynthesis protein PurH (499 aa).

One can recognise an MGS-like domain in the interval 1 to 144 (MIKRALISVF…KNFKDVVVLT (144 aa)).

This sequence belongs to the PurH family.

It carries out the reaction (6R)-10-formyltetrahydrofolate + 5-amino-1-(5-phospho-beta-D-ribosyl)imidazole-4-carboxamide = 5-formamido-1-(5-phospho-D-ribosyl)imidazole-4-carboxamide + (6S)-5,6,7,8-tetrahydrofolate. The catalysed reaction is IMP + H2O = 5-formamido-1-(5-phospho-D-ribosyl)imidazole-4-carboxamide. Its pathway is purine metabolism; IMP biosynthesis via de novo pathway; 5-formamido-1-(5-phospho-D-ribosyl)imidazole-4-carboxamide from 5-amino-1-(5-phospho-D-ribosyl)imidazole-4-carboxamide (10-formyl THF route): step 1/1. It participates in purine metabolism; IMP biosynthesis via de novo pathway; IMP from 5-formamido-1-(5-phospho-D-ribosyl)imidazole-4-carboxamide: step 1/1. This chain is Bifunctional purine biosynthesis protein PurH, found in Clostridium botulinum (strain Kyoto / Type A2).